The primary structure comprises 402 residues: Caspase-1 (402 aa).

In terms of domain architecture, CARD spans 1–91 (MADKILRAKR…YLAGILELQS (91 aa)). The propeptide occupies 1 to 118 (MADKILRAKR…PSSSETKEEQ (118 aa)). Residues 98–125 (FVATEDSKGGHPSSSETKEEQNKEDGTF) are disordered. A compositionally biased stretch (basic and acidic residues) spans 113-123 (ETKEEQNKEDG). Active-site residues include His236 and Cys284. Residues 297-314 (SVRDSEEDFLTDAIFEDD) constitute a propeptide that is removed on maturation. A Phosphoserine modification is found at Ser301. Residue Arg343 is modified to Omega-N-methylarginine.

The protein belongs to the peptidase C14A family. As to quaternary structure, heterotetramer that consists of two anti-parallel arranged heterodimers, each one formed by a 20 kDa (Caspase-1 subunit p20) and a 10 kDa (Caspase-1 subunit p10) subunit. May be a component of the inflammasome, a protein complex which also includes PYCARD, CARD8 and NLRP2 and whose function would be the activation of pro-inflammatory caspases. Component of the AIM2 PANoptosome complex, a multiprotein complex that drives inflammatory cell death (PANoptosis). Both the p10 and p20 subunits interact with MEFV. Interacts with CARD17P/INCA and CARD18. Interacts with SERPINB1; this interaction regulates CASP1 activity. In terms of assembly, heterotetramer that consists of two anti-parallel arranged heterodimers, each one formed by a 20 kDa (Caspase-1 subunit p20) and a 10 kDa (Caspase-1 subunit p10) subunit. The two subunits are derived from the precursor sequence by an autocatalytic mechanism. Post-translationally, ubiquitinated via 'Lys-11'-linked polyubiquitination. Deubiquitinated by USP8. High level expression seen in spleen and lung, low level expression seen in brain, heart, liver, kidney, testis and skeletal muscle.

It localises to the cytoplasm. It is found in the cell membrane. The catalysed reaction is Strict requirement for an Asp residue at position P1 and has a preferred cleavage sequence of Tyr-Val-Ala-Asp-|-.. Its function is as follows. Thiol protease involved in a variety of inflammatory processes by proteolytically cleaving other proteins, such as the precursors of the inflammatory cytokines interleukin-1 beta (IL1B) and interleukin 18 (IL18) as well as the pyroptosis inducer Gasdermin-D (GSDMD), into active mature peptides. Plays a key role in cell immunity as an inflammatory response initiator: once activated through formation of an inflammasome complex, it initiates a pro-inflammatory response through the cleavage of the two inflammatory cytokines IL1B and IL18, releasing the mature cytokines which are involved in a variety of inflammatory processes. Cleaves a tetrapeptide after an Asp residue at position P1. Also initiates pyroptosis, a programmed lytic cell death pathway, through cleavage of GSDMD. In contrast to cleavage of interleukin IL1B, recognition and cleavage of GSDMD is not strictly dependent on the consensus cleavage site but depends on an exosite interface on CASP1 that recognizes and binds the Gasdermin-D, C-terminal (GSDMD-CT) part. Cleaves and activates CASP7 in response to bacterial infection, promoting plasma membrane repair. Upon inflammasome activation, during DNA virus infection but not RNA virus challenge, controls antiviral immunity through the cleavage of CGAS, rendering it inactive. In apoptotic cells, cleaves SPHK2 which is released from cells and remains enzymatically active extracellularly. The polypeptide is Caspase-1 (Casp1) (Mus musculus (Mouse)).